We begin with the raw amino-acid sequence, 280 residues long: 3-methyl-2-oxobutanoate hydroxymethyltransferase (280 aa).

Mg(2+) is bound by residues Asp-61 and Asp-100. 3-methyl-2-oxobutanoate is bound by residues 61-62 (DS), Asp-100, and Lys-130. Glu-132 is a binding site for Mg(2+). Glu-198 acts as the Proton acceptor in catalysis.

The protein belongs to the PanB family. Homodecamer; pentamer of dimers. It depends on Mg(2+) as a cofactor.

Its subcellular location is the cytoplasm. It carries out the reaction 3-methyl-2-oxobutanoate + (6R)-5,10-methylene-5,6,7,8-tetrahydrofolate + H2O = 2-dehydropantoate + (6S)-5,6,7,8-tetrahydrofolate. It functions in the pathway cofactor biosynthesis; (R)-pantothenate biosynthesis; (R)-pantoate from 3-methyl-2-oxobutanoate: step 1/2. In terms of biological role, catalyzes the reversible reaction in which hydroxymethyl group from 5,10-methylenetetrahydrofolate is transferred onto alpha-ketoisovalerate to form ketopantoate. The chain is 3-methyl-2-oxobutanoate hydroxymethyltransferase from Mycolicibacterium vanbaalenii (strain DSM 7251 / JCM 13017 / BCRC 16820 / KCTC 9966 / NRRL B-24157 / PYR-1) (Mycobacterium vanbaalenii).